The following is a 129-amino-acid chain: Protein yippee-like At5g53940 (129 aa).

One can recognise a Yippee domain in the interval R12–I109. Positions 16, 19, 72, and 75 each coordinate Zn(2+).

It belongs to the yippee family.

The protein is Protein yippee-like At5g53940 of Arabidopsis thaliana (Mouse-ear cress).